The following is a 273-amino-acid chain: Peptide deformylase 1B, chloroplastic/mitochondrial (273 aa).

A chloroplast and mitochondrion-targeting transit peptide spans 1–56; that stretch reads MAVCNCFLQAPPLSRILLPVLSRRATTLSAGYGRLKSTVTFCSTVNRTSPLTSSVR. Fe cation contacts are provided by cysteine 171 and histidine 213. The active site involves glutamate 214. Histidine 217 is a binding site for Fe cation. Over residues 246–261 the composition is skewed to basic and acidic residues; sequence YEEKTGLPSPERVEAR. Residues 246–273 form a disordered region; it reads YEEKTGLPSPERVEARQKRKAGVGFGKR. Positions 262–273 are enriched in basic residues; sequence QKRKAGVGFGKR.

This sequence belongs to the polypeptide deformylase family. Homodimer. Fe(2+) is required as a cofactor. As to expression, expressed in leaves and flowers.

Its subcellular location is the plastid. It is found in the chloroplast stroma. It localises to the mitochondrion. It carries out the reaction N-terminal N-formyl-L-methionyl-[peptide] + H2O = N-terminal L-methionyl-[peptide] + formate. With respect to regulation, inhibited by actinonin. In terms of biological role, removes the formyl group from the N-terminal Met of newly synthesized proteins. Has a preferred substrate specificity towards the photosystem II (PS II) D1 polypeptide. The protein is Peptide deformylase 1B, chloroplastic/mitochondrial (PDF1B) of Arabidopsis thaliana (Mouse-ear cress).